We begin with the raw amino-acid sequence, 230 residues long: Cytidylate kinase (230 aa).

12–20 (GPSGAGKGT) is a binding site for ATP.

The protein belongs to the cytidylate kinase family. Type 1 subfamily.

Its subcellular location is the cytoplasm. The enzyme catalyses CMP + ATP = CDP + ADP. It catalyses the reaction dCMP + ATP = dCDP + ADP. This chain is Cytidylate kinase, found in Shewanella halifaxensis (strain HAW-EB4).